A 572-amino-acid polypeptide reads, in one-letter code: Urease subunit alpha (572 aa).

The Urease domain occupies 133–572; it reads GGIDLHVHYI…TSLSQRYFLF (440 aa). Ni(2+) is bound by residues H138, H140, and K221. The residue at position 221 (K221) is an N6-carboxylysine. H223 is a substrate binding site. Residues H250 and H276 each coordinate Ni(2+). Residue H324 is the Proton donor of the active site. D364 is a Ni(2+) binding site.

Belongs to the metallo-dependent hydrolases superfamily. Urease alpha subunit family. As to quaternary structure, heterotrimer of UreA (gamma), UreB (beta) and UreC (alpha) subunits. Three heterotrimers associate to form the active enzyme. Ni cation is required as a cofactor. In terms of processing, carboxylation allows a single lysine to coordinate two nickel ions.

It is found in the cytoplasm. It carries out the reaction urea + 2 H2O + H(+) = hydrogencarbonate + 2 NH4(+). Its pathway is nitrogen metabolism; urea degradation; CO(2) and NH(3) from urea (urease route): step 1/1. Ureolysis may allow urea to be employed as a nitrogen source for growth and produces ammonia which may protect from killing at low pH. The sequence is that of Urease subunit alpha from Streptococcus salivarius (strain 57.I).